The following is a 63-amino-acid chain: Large ribosomal subunit protein uL29 (63 aa).

This sequence belongs to the universal ribosomal protein uL29 family.

In Shewanella denitrificans (strain OS217 / ATCC BAA-1090 / DSM 15013), this protein is Large ribosomal subunit protein uL29.